The primary structure comprises 95 residues: Integration host factor subunit beta (95 aa).

A disordered region spans residues 56-95; the sequence is RAPRTGRNPKTGETVELDGKHVPHFKPGKELRDRVNESIA. Positions 72 to 95 are enriched in basic and acidic residues; the sequence is LDGKHVPHFKPGKELRDRVNESIA.

Belongs to the bacterial histone-like protein family. As to quaternary structure, heterodimer of an alpha and a beta chain.

In terms of biological role, this protein is one of the two subunits of integration host factor, a specific DNA-binding protein that functions in genetic recombination as well as in transcriptional and translational control. This Pseudoalteromonas translucida (strain TAC 125) protein is Integration host factor subunit beta.